The following is a 479-amino-acid chain: Sodium-coupled neutral amino acid transporter 5 (479 aa).

At 1–58 (MAISCAVGMEMQEPKMNGTLSTGAAAGYRQEREGFLPTTHGPAPGRKPVQFLDFEGKT) the chain is on the cytoplasmic side. A helical membrane pass occupies residues 59–81 (SFGMSVFNLSNAIMGSGILGLAY). Residues 82–97 (AMAHTGVIFFLALLLC) lie on the Extracellular side of the membrane. A helical transmembrane segment spans residues 98-118 (IALLSSYSIHLLLTCASVVGI). Residues 119–135 (RAYEQLGQRAFGPAGKV) are Cytoplasmic-facing. The helical transmembrane segment at 136-156 (VVAIIICLHNVGAMSSYLFII) threads the bilayer. Residues 157-176 (KSELPLVIGTFLHMDPEGDW) lie on the Extracellular side of the membrane. A helical transmembrane segment spans residues 177–197 (FLKGNLLIILVSLLIILPLAL). The Cytoplasmic portion of the chain corresponds to 198-202 (MKHLG). The chain crosses the membrane as a helical span at residues 203 to 223 (YLGYTSSLSLTCMLFFLISVI). Topologically, residues 224 to 264 (YKKFQLGCVVSHNDTVVESEPAPLQAFNSSCEAKLFTVDSQ) are extracellular. Cys231 and Cys254 are joined by a disulfide. Residue Asn236 is glycosylated (N-linked (GlcNAc...) asparagine). Residues 265–285 (MSYTVPIMAFAFVCHPEVLPI) traverse the membrane as a helical segment. Over 286 to 302 (YTELCCPTQRRMQAVAN) the chain is Cytoplasmic. Residues 303 to 323 (MSIGAMFIMYGLTATFGYLTF) traverse the membrane as a helical segment. Residues 324–341 (YSTVKAEMLEMYTQEDLL) are Extracellular-facing. A helical membrane pass occupies residues 342–362 (ILCVRLAVLLAVTLTVPVVLF). Topologically, residues 363–383 (PIRRALQQLLFPSKAFSWPRH) are cytoplasmic. Residues 384–404 (VAIALILLILVNILVICVPTI) traverse the membrane as a helical segment. At 405 to 406 (RD) the chain is on the extracellular side. Residues 407 to 427 (IFGFIGSTSAPSLIFILPSVF) traverse the membrane as a helical segment. The Cytoplasmic segment spans residues 428-446 (YLRIVPADMEPLFSWPKIQ). A helical membrane pass occupies residues 447 to 467 (ALCFGVLGVLFMAISLGFMFA). Over 468–479 (NWATGQSRMSGH) the chain is Extracellular.

It belongs to the amino acid/polyamine transporter 2 family. As to expression, highly expressed in neocortex, hippocampus, striatum and spinal cord by astrocytes (at protein level). Expressed in brain, lung, stomach, kidney, spleen and testis. Expressed in the cerebral cortex between the second and third postnatal week, where expressed exclusively in glial cells from postnatal day 14 to adulthood (at protein level). Expressed in the cerebellum at post natal day 12 (P12). Expressed in liver. Expressed inside the cell body of the astrocytes.

Its subcellular location is the cell membrane. The enzyme catalyses L-serine(out) + Na(+)(out) + H(+)(in) = L-serine(in) + Na(+)(in) + H(+)(out). The catalysed reaction is L-alanine(out) + Na(+)(out) + H(+)(in) = L-alanine(in) + Na(+)(in) + H(+)(out). It carries out the reaction glycine(out) + Na(+)(out) + H(+)(in) = glycine(in) + Na(+)(in) + H(+)(out). It catalyses the reaction L-glutamine(out) + Na(+)(out) + H(+)(in) = L-glutamine(in) + Na(+)(in) + H(+)(out). The enzyme catalyses L-asparagine(out) + Na(+)(out) + H(+)(in) = L-asparagine(in) + Na(+)(in) + H(+)(out). The catalysed reaction is L-histidine(out) + Na(+)(out) + H(+)(in) = L-histidine(in) + Na(+)(in) + H(+)(out). It carries out the reaction L-cysteine(out) + Na(+)(out) + H(+)(in) = L-cysteine(in) + Na(+)(in) + H(+)(out). Its activity is regulated as follows. Not inhibited by lithium. Partial allosteric regulation on ions sodium binding. Functionally, symporter that cotransports neutral amino acids and sodium ions, coupled to an H(+) antiporter activity. Releases L-glutamine and glycine from astroglial cells and may participate in the glutamate/GABA-glutamine cycle and the NMDA receptors activation. In addition contributes significantly to L-glutamine uptake in retina, namely in ganglion and Mueller cells and, therefore participates in the retinal glutamate-glutamine cycle. The transport activity is pH sensitive, Li(+) tolerant, bidirectional and associated with large uncoupled fluxes of protons. The transport is electroneutral coupled to the cotransport of 1 Na(+) and the antiport of 1 H(+). May have particular importance for modulation of net hepatic glutamine flux. The polypeptide is Sodium-coupled neutral amino acid transporter 5 (Rattus norvegicus (Rat)).